Here is a 391-residue protein sequence, read N- to C-terminus: Isochorismate synthase EntC (391 aa).

Positions 140, 142, 145, and 146 each coordinate Mg(2+). Lys-147 functions as the Proton acceptor in the catalytic mechanism. The active-site Proton donor is Glu-197. Residues Gly-214, Ser-215, Glu-241, Ala-303, Arg-347, and Gly-361 each contribute to the isochorismate site. Glu-241 contributes to the Mg(2+) binding site. Glu-376 contacts Mg(2+). Lys-380 lines the isochorismate pocket.

The protein belongs to the isochorismate synthase family. In terms of assembly, monomer. Forms a specific pairwise interaction with EntB; this interaction likely facilitates substrate channeling to connect the EntB and EntC active sites. Mg(2+) serves as cofactor.

The catalysed reaction is chorismate = isochorismate. It functions in the pathway siderophore biosynthesis; enterobactin biosynthesis. Its function is as follows. Involved in the biosynthesis of the siderophore enterobactin (macrocyclic trimeric lactone of N-(2,3-dihydroxybenzoyl)-serine). Catalyzes the reversible conversion of chorismate to isochorismate. The protein is Isochorismate synthase EntC of Escherichia coli O157:H7.